We begin with the raw amino-acid sequence, 186 residues long: Tegument protein UL55 (186 aa).

This sequence belongs to the alphaherpesvirinae HHV-1 UL55 family.

The protein localises to the virion tegument. Its subcellular location is the host nucleus matrix. The chain is Tegument protein UL55 from Homo sapiens (Human).